The following is a 591-amino-acid chain: CTP synthase 1-A (591 aa).

The region spanning 300 to 554 (SIALVGKYTK…LASVGRLSQY (255 aa)) is the Glutamine amidotransferase type-1 domain. Catalysis depends on for GATase activity residues Cys399, His526, and Glu528.

The protein belongs to the CTP synthase family.

The enzyme catalyses UTP + L-glutamine + ATP + H2O = CTP + L-glutamate + ADP + phosphate + 2 H(+). It participates in pyrimidine metabolism; CTP biosynthesis via de novo pathway; CTP from UDP: step 2/2. This enzyme is involved in the de novo synthesis of CTP, a precursor of DNA, RNA and phospholipids. Catalyzes the ATP-dependent amination of UTP to CTP with either L-glutamine or ammonia as a source of nitrogen. The polypeptide is CTP synthase 1-A (ctps1-a) (Xenopus laevis (African clawed frog)).